Reading from the N-terminus, the 668-residue chain is MSILFSPAQIGTLQLRNRIIMTPMHLGYTPNGEVTDQLIEFYRVRARGGAGLIVVGGCGIDRIGNAYGMTQLDDDRFIPGLRRLADAVQAEGAKIVAQLYQAGRYAHSALTGQPAVAPSPIPSKLTGETPVELTEEKIAEIVASFAKAAKRAKTAGFDGVEIIASAGYLISQFLSPLTNKRTDRYGGDLQARMTFGLEVVAAVREAVGSDYPIIVRVAGNDFMPGSHTNTEAQVFCQAMEKSGVNAINVTGGWHETQVPQITMNVPPGAYAYLAYGIKQAVSIPVIACNRINTPDLAEAILQEGKADFIGMARSLMADPELPNKAMSGHPEQIRPCIGCNQGCLDHVFRMKPVSCLVNAEAGREAELSLTPTSQPGKILVIGAGAAGLEFARVAALRGHKVTIWEESDQAGGQLILAAAPPGRKDFLHLRTYLVNACRDLGVEIQYHTKATPENILSAVQEGKFNRVVIATGAHPITPPIPIEEGVKVIQAWDVLAGRSKAGQNIIIVGGGAVGVETALLLAESGTLDNETLRFLMLQQAETEKELYRLLIQGTKKITVLEMANGIGRDIGPSTRWSMLADLKRHQVNCLDETTVLEIRREGVLVKNAGTQKILPADTVILAVGSRSQNELYQALQGKVEYLSIIGDAIKPRKVMDAIHQAYNEAIKY.

Residues 23-25 (PMH), Gly-57, Gln-98, Arg-216, Arg-290, and 312-313 (AR) each bind FMN. Residues Cys-336 and Cys-339 each contribute to the [4Fe-4S] cluster site. Gln-341 contributes to the FAD binding site. 2 residues coordinate [4Fe-4S] cluster: Cys-343 and Cys-355. FAD-binding residues include Ala-386, Glu-405, Gln-413, Arg-423, and Ala-450.

The protein in the N-terminal section; belongs to the NADH:flavin oxidoreductase/NADH oxidase family. As to quaternary structure, homotetramer. It depends on FMN as a cofactor. The cofactor is FAD. [4Fe-4S] cluster serves as cofactor.

The protein localises to the cytoplasm. Functionally, metal reductase able to reduce Fe(III)-chelates to Fe(II)-chelates, as well as soluble Cr(VI) and U(VI), using NADH as electron donor. Cannot use NADPH as an electron donor. Is unable to reduce riboflavin and FMN with NADH as electron donor. May have an in vivo role in metal reduction in D.reducens, which is an organism capable of reducing contaminant heavy metals and radionuclides. This Desulforamulus reducens (strain ATCC BAA-1160 / DSM 100696 / MI-1) (Desulfotomaculum reducens) protein is Metal reductase.